The sequence spans 412 residues: MPLEEILSRLPLKSTRAVRSTCKKWDSLFKNRSFISKAAAAREGESQMVVLMDHNLHLVSFFFGSDTSVEIKGKRICLNDDSDSEQVKISQVFHCEGLLLCILKDDNFSLVVWNPYWGQTRWIKPRCSFEIPQGCDMYRYAIGYDNKRRNHKILRFIDYEFHYPRDNVVLWYEIYDFESDLWTTLDVTTPHWLINCGNRGVTLKGNTYWCAKKRNSDLFLNADHIICFDFTSERFGPLLLLPFSDLDGVVTLACVREEKLAALVCHEDVVEVWITIKIEANEVLWSKFLTVNVDLGDEIPSSLTYGSFFIDEEKKVAMIFDKTLDRGDTVHIMGEAGYGGQVDLGEPVNKRRCPLVCSYVPSLVQIKKPAGFQRKQQSKLEKRQYVRNISKLRALKTQSSWTLSMSLECHQQ.

The F-box domain occupies 1–38 (MPLEEILSRLPLKSTRAVRSTCKKWDSLFKNRSFISKA).

The chain is Putative F-box protein At3g22940 from Arabidopsis thaliana (Mouse-ear cress).